Here is a 378-residue protein sequence, read N- to C-terminus: Mannitol-1-phosphate 5-dehydrogenase (378 aa).

4–15 provides a ligand contact to NAD(+); it reads SVHFGAGNIGRG.

It belongs to the mannitol dehydrogenase family.

The enzyme catalyses D-mannitol 1-phosphate + NAD(+) = beta-D-fructose 6-phosphate + NADH + H(+). This Streptococcus pneumoniae (strain CGSP14) protein is Mannitol-1-phosphate 5-dehydrogenase.